The sequence spans 191 residues: Molybdenum cofactor guanylyltransferase (191 aa).

Residues 11-13, lysine 23, aspartate 66, and aspartate 97 contribute to the GTP site; that span reads LCG. Aspartate 97 serves as a coordination point for Mg(2+).

This sequence belongs to the MobA family. In terms of assembly, monomer. Mg(2+) serves as cofactor.

The protein localises to the cytoplasm. It carries out the reaction Mo-molybdopterin + GTP + H(+) = Mo-molybdopterin guanine dinucleotide + diphosphate. Transfers a GMP moiety from GTP to Mo-molybdopterin (Mo-MPT) cofactor (Moco or molybdenum cofactor) to form Mo-molybdopterin guanine dinucleotide (Mo-MGD) cofactor. The chain is Molybdenum cofactor guanylyltransferase from Campylobacter jejuni subsp. jejuni serotype O:2 (strain ATCC 700819 / NCTC 11168).